A 396-amino-acid polypeptide reads, in one-letter code: MLVRSLELEEFRCFRHLHLVLPDRGLRLVGANGSGKTSLIEALYMLATTKSFRASLERHLVHRSSGSELGIPPYARLAAELFTETERSTLEIVLMVDPASGTVRKLYRRDGRSLRAVEFVGTLRVVLFSPEDLELVTGSPQQRRRYLDTILSTIDRAYLRALARYTRILEHRNSLLKSLAERDQRAADEQLAYWDEQLVTYGAYLLVARLRFLAEWGPRLRDHFQALDTQAQVLTTAYLPSIDLPESLLSELAAREVADAQLIVGARYRETLERLRPDELRRGSTLVGPHRDDVEFLLGEEPLTAFGSRGVQRLAVIAAKLAEIAVIHRVTDDWPVLLLDDALSELDQQHRAHLLATLSALPAQLILTATESDVLETPVLSSLPLFRLNDGRLEPG.

Residue glycine 30–threonine 37 participates in ATP binding.

Belongs to the RecF family.

It is found in the cytoplasm. The RecF protein is involved in DNA metabolism; it is required for DNA replication and normal SOS inducibility. RecF binds preferentially to single-stranded, linear DNA. It also seems to bind ATP. In Thermomicrobium roseum (strain ATCC 27502 / DSM 5159 / P-2), this protein is DNA replication and repair protein RecF.